A 318-amino-acid polypeptide reads, in one-letter code: Galactofuranose-binding protein YtfQ (318 aa).

Positions M1–A21 are cleaved as a signal peptide. Beta-D-galactofuranose-binding positions include E34 to R38, D111 to R112, R167, N220, and D248. Residues C150 and C214 are joined by a disulfide bond.

This sequence belongs to the bacterial solute-binding protein 2 family. As to quaternary structure, the complex is composed of two ATP-binding proteins (YtfR), two transmembrane proteins (YtfT and YjfF) and a solute-binding protein (YtfQ).

Its subcellular location is the periplasm. In terms of biological role, part of the ABC transporter complex YtfQRT-YjfF involved in galactofuranose transport. Binds to both alpha- and beta-galactofuranose. This chain is Galactofuranose-binding protein YtfQ (ytfQ), found in Escherichia coli (strain K12).